A 346-amino-acid polypeptide reads, in one-letter code: Acetyl-coenzyme A carboxylase carboxyl transferase subunit beta (346 aa).

One can recognise a CoA carboxyltransferase N-terminal domain in the interval 24–292 (LWIKCPKSGD…LPEVEPIAVA (269 aa)). Residues 300-311 (AEAEAAPDEVVE) are compositionally biased toward acidic residues. A disordered region spans residues 300-346 (AEAEAAPDEVVEVEAPAVDEIVEEKPAATKAKPRSKAKSKAAPKTDE). A compositionally biased stretch (basic residues) spans 330 to 340 (AKPRSKAKSKA).

It belongs to the AccD/PCCB family. As to quaternary structure, acetyl-CoA carboxylase is a heterohexamer composed of biotin carboxyl carrier protein (AccB), biotin carboxylase (AccC) and two subunits each of ACCase subunit alpha (AccA) and ACCase subunit beta (AccD).

Its subcellular location is the cytoplasm. The catalysed reaction is N(6)-carboxybiotinyl-L-lysyl-[protein] + acetyl-CoA = N(6)-biotinyl-L-lysyl-[protein] + malonyl-CoA. The protein operates within lipid metabolism; malonyl-CoA biosynthesis; malonyl-CoA from acetyl-CoA: step 1/1. In terms of biological role, component of the acetyl coenzyme A carboxylase (ACC) complex. Biotin carboxylase (BC) catalyzes the carboxylation of biotin on its carrier protein (BCCP) and then the CO(2) group is transferred by the transcarboxylase to acetyl-CoA to form malonyl-CoA. The polypeptide is Acetyl-coenzyme A carboxylase carboxyl transferase subunit beta (Hirschia baltica (strain ATCC 49814 / DSM 5838 / IFAM 1418)).